The sequence spans 415 residues: Vascular endothelial growth factor C (415 aa).

An N-terminal signal peptide occupies residues 1–31 (MHLLCFLSLACSLLAAALIPGPREAPATVAA). Residues 32–107 (FESGLGFSEA…RTGDTVKLAA (76 aa)) constitute a propeptide that is removed on maturation. Intrachain disulfides connect cysteine 127-cysteine 169, cysteine 158-cysteine 205, and cysteine 162-cysteine 207. Asparagine 171, asparagine 201, and asparagine 236 each carry an N-linked (GlcNAc...) asparagine glycan. A propeptide spanning residues 224–415 (SLPATLPQCQ…PSYWKRPHLN (192 aa)) is cleaved from the precursor. Repeat copies occupy residues 276–291 (CGPN…QCVC), 300–315 (CGPH…QCVC), 324–339 (CGAN…QCVC), and 343–358 (CPRN…ACEC). The interval 276 to 358 (CGPNKELDED…LNPGKCACEC (83 aa)) is 4 X 16 AA repeats of C-X(10)-C-X-C-X(1,3)-C.

This sequence belongs to the PDGF/VEGF growth factor family. In terms of assembly, homodimer; non-covalent and antiparallel. Interacts with FLT4/VEGFR3; the interaction is required for FLT4/VEGFR3 homodimarization and activation. Post-translationally, undergoes a complex proteolytic maturation which generates a variety of processed secreted forms with increased activity toward VEGFR-3, but only the fully processed form could activate VEGFR-2. VEGF-C first form an antiparallel homodimer linked by disulfide bonds. Before secretion, a cleavage occurs between Arg-223 and Ser-224 producing a heterotetramer. The next extracellular step of the processing removes the N-terminal propeptide. Finally the mature VEGF-C is composed mostly of two VEGF homology domains (VHDs) bound by non-covalent interactions. Highly expressed in the lung, ovary, preputial gland and the adrenal gland. Expressed in the post-pubertal mammary glands.

It is found in the secreted. Its function is as follows. Growth factor active in angiogenesis, and endothelial cell growth, stimulating their proliferation and migration and also has effects on the permeability of blood vessels. May function in angiogenesis of the venous and lymphatic vascular systems during embryogenesis, and also in the maintenance of differentiated lymphatic endothelium in adults. Binds and activates KDR/VEGFR2 and FLT4/VEGFR3 receptors. The sequence is that of Vascular endothelial growth factor C (Vegfc) from Rattus norvegicus (Rat).